Consider the following 364-residue polypeptide: Protein FAM81A (364 aa).

Coiled coils occupy residues 75-107, 158-189, and 261-287; these read FLEE…RDNI, NKEQ…VDLS, and ANER…QKRN. Residues 281-300 form a disordered region; that stretch reads EESQKRNAEGQRKPDEEKVH.

This sequence belongs to the FAM81 family. As to quaternary structure, interacts with DLG4/PSD-95, GRIN2B/GLUN2B and SYNGAP1; the interactions facilitate condensate formation. Expressed in most regions of the brain (at protein level).

The protein localises to the postsynaptic density. The protein resides in the cytoplasm. Its function is as follows. Facilitates the interaction and assembly of proteins within the postsynaptic density by promoting the condensation of postsynaptic proteins via liquid-liquid phase separation. Required for neuronal activity. Accumulation at the postsynaptic density results in enlargement of dendritic spines. This chain is Protein FAM81A (Fam81a), found in Mus musculus (Mouse).